The chain runs to 470 residues: Argininosuccinate lyase (470 aa).

It belongs to the lyase 1 family. Argininosuccinate lyase subfamily.

The protein localises to the cytoplasm. It carries out the reaction 2-(N(omega)-L-arginino)succinate = fumarate + L-arginine. It functions in the pathway amino-acid biosynthesis; L-arginine biosynthesis; L-arginine from L-ornithine and carbamoyl phosphate: step 3/3. The chain is Argininosuccinate lyase from Mycolicibacterium vanbaalenii (strain DSM 7251 / JCM 13017 / BCRC 16820 / KCTC 9966 / NRRL B-24157 / PYR-1) (Mycobacterium vanbaalenii).